We begin with the raw amino-acid sequence, 222 residues long: Peptide methionine sulfoxide reductase MsrA (222 aa).

The active site involves Cys60.

It belongs to the MsrA Met sulfoxide reductase family.

The enzyme catalyses L-methionyl-[protein] + [thioredoxin]-disulfide + H2O = L-methionyl-(S)-S-oxide-[protein] + [thioredoxin]-dithiol. The catalysed reaction is [thioredoxin]-disulfide + L-methionine + H2O = L-methionine (S)-S-oxide + [thioredoxin]-dithiol. In terms of biological role, has an important function as a repair enzyme for proteins that have been inactivated by oxidation. Catalyzes the reversible oxidation-reduction of methionine sulfoxide in proteins to methionine. This chain is Peptide methionine sulfoxide reductase MsrA, found in Pseudomonas putida (strain GB-1).